A 369-amino-acid polypeptide reads, in one-letter code: MKHMLIAGGGIGGLSAAISLRKAGFSVTLCEAASENRKTGAGILQPQNALAVLKELGVFEDCCKHGFQTEWFKTFDEQGNLLFQVSESFLDDSLPGRNNILRKTLNDILMKHAEAVGVDIKWGKKVVAYEETAESVTALCEDGEKMQADILAGFDGIHSVVRDKMLQKETEKEHLGMGAWRFYIELPDYTFEDATFMYRSGDTQIGVVPLAQHAGYVFVLQPCTSDYWDEEDTRFDRVKEILSGFRGLDFVTKHMSKQHPVIFNKLEQVAVQEPWHKGRVIIGGDAAHAGAPTLAQGAAMAIEDAIVLAEELQNHADHETALQAYYKRRAPRALKVQNLSSEIVRRRLKGEPGAEELIGECYAVLREGY.

An N-terminal signal peptide occupies residues 1 to 32 (MKHMLIAGGGIGGLSAAISLRKAGFSVTLCEA). FAD is bound by residues G12, 31 to 32 (EA), V126, and D285.

FAD serves as cofactor.

This chain is Putative FAD-dependent monooxygenase YetM (yetM), found in Bacillus subtilis (strain 168).